The following is a 411-amino-acid chain: Pre-mRNA-splicing factor dre4 (411 aa).

Residues 3 to 36 enclose the WW 1 domain; sequence QPLPPGWTEHKAPSGIPYYWNAELKKSTYQRPSF. The segment at 65–84 is disordered; it reads NAEERKNSRDLRKQLPDRPK. Residues 66 to 83 show a composition bias toward basic and acidic residues; that stretch reads AEERKNSRDLRKQLPDRP. The WW 2 domain maps to 89 to 122; sequence IPNNDSWVVVFTKKNRYFFHNLKSHESYWEPPLE. Residues 138–209 are disordered; sequence ISKDSSQSQN…KSHSAEELEF (72 aa). A compositionally biased stretch (polar residues) spans 140–151; it reads KDSSQSQNVDSG. A compositionally biased stretch (basic and acidic residues) spans 152–166; that stretch reads KTNHEEIHESRHLQT. Residues 167 to 179 show a composition bias toward acidic residues; it reads EIEEPSGLEESSE. The FF domain occupies 239–293; sequence TDDARRVFTELLKDKNIGAYQPWELVYPKLLDDDRFYVLDSGERRKEVFEEYCKS.

As to quaternary structure, component of the spliceosomal complex. Interacts with prp19.

Its subcellular location is the nucleus. Functionally, component of the spliceosome involved in mRNA processing. The protein is Pre-mRNA-splicing factor dre4 (dre4) of Schizosaccharomyces pombe (strain 972 / ATCC 24843) (Fission yeast).